We begin with the raw amino-acid sequence, 680 residues long: Serine/threonine-protein kinase YPK1 (680 aa).

Residues 1-11 are compositionally biased toward basic residues; the sequence is MYSWKSKFKFG. Residues 1–117 are disordered; the sequence is MYSWKSKFKF…GTPNDATSSS (117 aa). Basic and acidic residues-rich tracts occupy residues 12 to 21 and 41 to 56; these read KSKEEKEAKH and GEHD…DRKG. Thr57 is modified (phosphothreonine). Low complexity predominate over residues 59 to 71; it reads NPSNSSVVPVRVS. A phosphoserine mark is found at Ser61, Ser64, and Ser71. Residues 73 to 83 are compositionally biased toward polar residues; it reads DASSSTSTVRD. A compositionally biased stretch (low complexity) spans 84 to 97; that stretch reads SNGGNSENTNSSQN. The segment covering 98 to 117 has biased composition (polar residues); the sequence is LDETANIGSTGTPNDATSSS. Phosphoserine is present on Ser170. The Protein kinase domain maps to 347 to 602; the sequence is FDLLKVIGKG…ADEIRNHPFF (256 aa). ATP-binding positions include 353–361 and Lys376; that span reads IGKGSFGKV. Asp470 serves as the catalytic Proton acceptor. Position 502 is a phosphothreonine (Thr502). Position 504 is a phosphothreonine; by PKH1 (Thr504). Residues 603–673 enclose the AGC-kinase C-terminal domain; sequence SQLSWKRLLM…VGNEQLGSSM (71 aa). Phosphoserine occurs at positions 644 and 653. Phosphothreonine; by PKH1 is present on Thr662. Ser671 bears the Phosphoserine mark.

It belongs to the protein kinase superfamily. AGC Ser/Thr protein kinase family. RAC subfamily. In terms of processing, autophosphorylated. Phytosphingosine level stimulates phosphorylation by PKH1. The N-terminal half is phosphorylated by FPK1. Phosphorylation is inhibited by exogenous addition of phytosphingosine.

The protein localises to the cytoplasm. It is found in the cell membrane. The catalysed reaction is L-seryl-[protein] + ATP = O-phospho-L-seryl-[protein] + ADP + H(+). It carries out the reaction L-threonyl-[protein] + ATP = O-phospho-L-threonyl-[protein] + ADP + H(+). Activated by phytosphingosine (PHS), a sphingoid long chain base. Activated by PKH1 phosphorylation. Its function is as follows. Plays an essential role in the proliferation of yeast cells. Involved in a signaling pathway, required for optimal cell wall integrity, that acts in parallel with the PKC1-SLT2-dependent pathway. Downstream kinase in the sphingolipid-mediated signaling pathway. Phosphorylation is regulated by the intracellular sphingolipid concentration. Disruption or inhibition of sphingolipid synthesis leads to the activation and phosphorylation of YPK1 through the TORC2 and PKH1 pathways, which in turn phosphorylates ORM1 and LAG1 to activate sphingolipid synthesis. Cooperates with SLI1 in mediating resistance to the sphingolipid biosynthesis inhibitor drug myriocin (ISP-1); kinase activity is essential for the resistance. Required for both receptor-mediated and fluid-phase endocytosis, but is not necessary for receptor phosphorylation or ubiquitination. Necessary for the internalization of plasma membrane proteins carrying different types of internalization signals. Acts downstream of the PKH kinases to control endocytosis by phosphorylating components of the endocytic machinery. Phosphorylation of residue Thr-504 in the activation loop and residue Thr-662 are essential for activity. Phosphorylates and down-regulates flippase activator FPK1. The sequence is that of Serine/threonine-protein kinase YPK1 (YPK1) from Saccharomyces cerevisiae (strain ATCC 204508 / S288c) (Baker's yeast).